The sequence spans 143 residues: D-aminoacyl-tRNA deacylase (143 aa).

Residues 135–136 carry the Gly-cisPro motif, important for rejection of L-amino acids motif; the sequence is GP.

It belongs to the DTD family. In terms of assembly, homodimer.

It is found in the cytoplasm. It carries out the reaction glycyl-tRNA(Ala) + H2O = tRNA(Ala) + glycine + H(+). The enzyme catalyses a D-aminoacyl-tRNA + H2O = a tRNA + a D-alpha-amino acid + H(+). Functionally, an aminoacyl-tRNA editing enzyme that deacylates mischarged D-aminoacyl-tRNAs. Also deacylates mischarged glycyl-tRNA(Ala), protecting cells against glycine mischarging by AlaRS. Acts via tRNA-based rather than protein-based catalysis; rejects L-amino acids rather than detecting D-amino acids in the active site. By recycling D-aminoacyl-tRNA to D-amino acids and free tRNA molecules, this enzyme counteracts the toxicity associated with the formation of D-aminoacyl-tRNA entities in vivo and helps enforce protein L-homochirality. In Mycolicibacterium smegmatis (strain ATCC 700084 / mc(2)155) (Mycobacterium smegmatis), this protein is D-aminoacyl-tRNA deacylase.